We begin with the raw amino-acid sequence, 868 residues long: Monofunctional pimaradiene synthase (868 aa).

Mg(2+) contacts are provided by aspartate 620, aspartate 624, asparagine 764, threonine 768, and glutamate 772.

Belongs to the terpene synthase family. Tpsd subfamily. The cofactor is Mg(2+).

It carries out the reaction (+)-copalyl diphosphate = (-)-pimara-8(14),15-diene + diphosphate. The protein operates within terpene metabolism; oleoresin biosynthesis. Its function is as follows. Involved in defensive oleoresin formation in conifers in response to insect attack or other injury. Involved in diterpene (C20) olefins biosynthesis. Monofunctional enzyme lacking the DXDD motif in the class II active site relevant for the cyclization of geranylgeranyl diphosphate (GGPP). Requires (+)-copalyl diphosphate ((+)-CPP) as substrate, but no activity with GGPP or ent-CPP. Pimaradiene is the major products of the enzyme. This Pinus contorta (Shore pine) protein is Monofunctional pimaradiene synthase.